A 484-amino-acid polypeptide reads, in one-letter code: Protein phosphatase 1B (484 aa).

Over residues 1-14 (MGAFLDKPKTEKHN) the composition is skewed to basic and acidic residues. The disordered stretch occupies residues 1–20 (MGAFLDKPKTEKHNAHGAGN). A lipid anchor (N-myristoyl glycine) is attached at Gly2. Lys12 is covalently cross-linked (Glycyl lysine isopeptide (Lys-Gly) (interchain with G-Cter in ISG15)). In terms of domain architecture, PPM-type phosphatase spans 23–295 (RYGLSSMQGW…DNMSIVLVCF (273 aa)). 2 residues coordinate Mn(2+): Asp60 and Gly61. Residue Lys142 forms a Glycyl lysine isopeptide (Lys-Gly) (interchain with G-Cter in ISG15) linkage. Mn(2+)-binding residues include Asp243 and Asp286. Ser391 is subject to Phosphoserine. The interval 431 to 484 (EENPAEQAATAASSNSDAGNTVAMQESHTESKSDLAELDSCTEDAGTKMSGEKL) is disordered. A compositionally biased stretch (polar residues) spans 440 to 456 (TAASSNSDAGNTVAMQE).

It belongs to the PP2C family. Monomer. Interacts with PAK6. Interacts with the phosphorylated form of IKBKB/IKKB. Mg(2+) is required as a cofactor. Requires Mn(2+) as cofactor. In terms of processing, isgylation negatively regulates its activity. N-myristoylation is essential for the recognition of its substrates for dephosphorylation.

It localises to the cytoplasm. The protein localises to the cytosol. The protein resides in the membrane. The catalysed reaction is O-phospho-L-seryl-[protein] + H2O = L-seryl-[protein] + phosphate. It carries out the reaction O-phospho-L-threonyl-[protein] + H2O = L-threonyl-[protein] + phosphate. Its function is as follows. Enzyme with a broad specificity. Dephosphorylates PRKAA1 and PRKAA2. Inhibits TBK1-mediated antiviral signaling by dephosphorylating it at 'Ser-172'. Plays an important role in the termination of TNF-alpha-mediated NF-kappa-B activation through dephosphorylating and inactivating IKBKB/IKKB. This chain is Protein phosphatase 1B (PPM1B), found in Bos taurus (Bovine).